The primary structure comprises 353 residues: UPF0283 membrane protein YcjF (353 aa).

Positions 1-19 (MSEPLKPRIDFAEPLKEEP) are enriched in basic and acidic residues. The interval 1 to 35 (MSEPLKPRIDFAEPLKEEPTSAFKAQQTFSEAESR) is disordered. Transmembrane regions (helical) follow at residues 70-90 (MVMGGLALFGASVVGQGVQWT), 100-120 (VALGGCAAGALIVGAGVGSVV), and 213-233 (ESTLMIAVSPLALVDMAFIAW).

The protein belongs to the UPF0283 family.

The protein resides in the cell inner membrane. The polypeptide is UPF0283 membrane protein YcjF (Salmonella paratyphi B (strain ATCC BAA-1250 / SPB7)).